The sequence spans 256 residues: Acetylglutamate kinase (256 aa).

Residues 40–41, arginine 62, and asparagine 154 contribute to the substrate site; that span reads GG.

This sequence belongs to the acetylglutamate kinase family. ArgB subfamily.

The protein localises to the cytoplasm. It catalyses the reaction N-acetyl-L-glutamate + ATP = N-acetyl-L-glutamyl 5-phosphate + ADP. It participates in amino-acid biosynthesis; L-arginine biosynthesis; N(2)-acetyl-L-ornithine from L-glutamate: step 2/4. Catalyzes the ATP-dependent phosphorylation of N-acetyl-L-glutamate. In Staphylococcus aureus (strain MRSA252), this protein is Acetylglutamate kinase.